The following is a 56-amino-acid chain: uncharacterized protein (56 aa).

This is an uncharacterized protein from Dictyostelium discoideum (Social amoeba).